A 177-amino-acid chain; its full sequence is Small ribosomal subunit protein bS21m (177 aa).

The N-terminal 17 residues, 1–17, are a transit peptide targeting the mitochondrion; sequence MLKSTLRLSRISLRRGF.

This sequence belongs to the bacterial ribosomal protein bS21 family. In terms of assembly, component of the mitochondrial small ribosomal subunit (mt-SSU). Mature yeast 74S mitochondrial ribosomes consist of a small (37S) and a large (54S) subunit. The 37S small subunit contains a 15S ribosomal RNA (15S mt-rRNA) and 34 different proteins. The 54S large subunit contains a 21S rRNA (21S mt-rRNA) and 46 different proteins.

It is found in the mitochondrion. In terms of biological role, component of the mitochondrial ribosome (mitoribosome), a dedicated translation machinery responsible for the synthesis of mitochondrial genome-encoded proteins, including at least some of the essential transmembrane subunits of the mitochondrial respiratory chain. The mitoribosomes are attached to the mitochondrial inner membrane and translation products are cotranslationally integrated into the membrane. This Saccharomyces cerevisiae (strain ATCC 204508 / S288c) (Baker's yeast) protein is Small ribosomal subunit protein bS21m (MRP21).